Reading from the N-terminus, the 135-residue chain is Lysozyme 2 (135 aa).

Positions 1–18 are cleaved as a signal peptide; sequence MNFLILFCVVASASVVYS. The I-type lysozyme domain occupies 19–135; the sequence is SISDQCLRCI…WRLVQAKGCS (117 aa). Disulfide bonds link Cys-24–Cys-100, Cys-29–Cys-35, Cys-40–Cys-49, Cys-62–Cys-82, Cys-72–Cys-78, and Cys-96–Cys-114. Glu-32 (proton donor) is an active-site residue. The active-site Nucleophile is Asp-43. Substrate is bound at residue 55-61; it reads KQGYWTD. Residues Tyr-86 and 107 to 109 contribute to the substrate site; that span reads HNG.

In terms of tissue distribution, expressed in the epithelia of the basophil cells in the digestive tubules, but not in the epithelial cells lining the digestive ducts and stomach. Expressed at a much lower level in the style sac-midgut tissues. No expression detected in mantle, gills, labial palps or hemocytes.

It is found in the secreted. It carries out the reaction Hydrolysis of (1-&gt;4)-beta-linkages between N-acetylmuramic acid and N-acetyl-D-glucosamine residues in a peptidoglycan and between N-acetyl-D-glucosamine residues in chitodextrins.. Activity decreased by 80% by addition of 0.01 M calcium, zinc or magnesium. Activity only decreased by 17% by addition of ammonium, and by 2% by addition of sodium. In terms of biological role, the main role of this lysozyme is in digestion. Has antibacterial activity against the Gram-positive bacterium P.cerevisiae and the Gram-negative bacteria E.coli and V.vulnificus. Shows some chitinase activity but no isopeptidase activity. The polypeptide is Lysozyme 2 (Crassostrea virginica (Eastern oyster)).